A 281-amino-acid chain; its full sequence is 4-deoxy-L-threo-5-hexosulose-uronate ketol-isomerase (281 aa).

Residues H198, H200, E205, and H248 each contribute to the Zn(2+) site.

It belongs to the KduI family. Zn(2+) is required as a cofactor.

It catalyses the reaction 5-dehydro-4-deoxy-D-glucuronate = 3-deoxy-D-glycero-2,5-hexodiulosonate. It functions in the pathway glycan metabolism; pectin degradation; 2-dehydro-3-deoxy-D-gluconate from pectin: step 4/5. Catalyzes the isomerization of 5-dehydro-4-deoxy-D-glucuronate to 3-deoxy-D-glycero-2,5-hexodiulosonate. In Levilactobacillus brevis (strain ATCC 367 / BCRC 12310 / CIP 105137 / JCM 1170 / LMG 11437 / NCIMB 947 / NCTC 947) (Lactobacillus brevis), this protein is 4-deoxy-L-threo-5-hexosulose-uronate ketol-isomerase.